The primary structure comprises 285 residues: Bifunctional protein FolD (285 aa).

NADP(+)-binding positions include 165–167 (GRS) and serine 190.

It belongs to the tetrahydrofolate dehydrogenase/cyclohydrolase family. In terms of assembly, homodimer.

It catalyses the reaction (6R)-5,10-methylene-5,6,7,8-tetrahydrofolate + NADP(+) = (6R)-5,10-methenyltetrahydrofolate + NADPH. The enzyme catalyses (6R)-5,10-methenyltetrahydrofolate + H2O = (6R)-10-formyltetrahydrofolate + H(+). It participates in one-carbon metabolism; tetrahydrofolate interconversion. Its function is as follows. Catalyzes the oxidation of 5,10-methylenetetrahydrofolate to 5,10-methenyltetrahydrofolate and then the hydrolysis of 5,10-methenyltetrahydrofolate to 10-formyltetrahydrofolate. The protein is Bifunctional protein FolD of Burkholderia thailandensis (strain ATCC 700388 / DSM 13276 / CCUG 48851 / CIP 106301 / E264).